A 230-amino-acid chain; its full sequence is NAD(P)H-hydrate epimerase (230 aa).

The region spanning 11–218 (AIDVDQELFT…ALQRKYGLNL (208 aa)) is the YjeF N-terminal domain. (6S)-NADPHX is bound at residue 61–65 (NNGGD). Asn-62 and Asp-126 together coordinate K(+). Residues 130 to 136 (GFSFKPP) and Asp-159 each bind (6S)-NADPHX. Residue Ser-162 participates in K(+) binding.

This sequence belongs to the NnrE/AIBP family. It depends on K(+) as a cofactor.

The catalysed reaction is (6R)-NADHX = (6S)-NADHX. The enzyme catalyses (6R)-NADPHX = (6S)-NADPHX. Catalyzes the epimerization of the S- and R-forms of NAD(P)HX, a damaged form of NAD(P)H that is a result of enzymatic or heat-dependent hydration. This is a prerequisite for the S-specific NAD(P)H-hydrate dehydratase to allow the repair of both epimers of NAD(P)HX. The sequence is that of NAD(P)H-hydrate epimerase from Drosophila yakuba (Fruit fly).